We begin with the raw amino-acid sequence, 475 residues long: MSPKTETKAGTGFKAGVKDYKLTYYTPDYVVKDTDILAAFRMTPQPGVPPEECGAAVAAESSTGTWTTVWTDGLTSLDRYKGRCYDLEPVAGEENQYIAYVAYPIDLFEEGSVTNLFTSIVGNVFGFKALRALRLEDLRIPVAYVKTFQGPPHGIQVERDKLNKYGRPLLGCTIKPKLGLSAKNYGRACYECLRGGLDFTKDDENVNSQPFMRWRDRFLFVAEAIFKSQSETGEIKGHYLNATAATCEEMLKRAAYAKELGVPIIMHDYLTGGFTANTSLAAYCRDNGLLLHIHRAMHAVIDRQKNHGIHFRVLAKALRLSGGDHLHSGTVVGKLEGEREVTLGFVDLMRDDYIEKDRSRGVYFTQDWCSMGGVMPVASGGIHVWHMPALTEIFGDDSCLQFGGGTLGHPWGNAPGAVANRVALEACVQARNEGRDLAREGNDVIRAACKWSPELAAACEVWKEIKFEFETIDTL.

A propeptide spanning residues 1–2 (MS) is cleaved from the precursor. An N-acetylproline modification is found at P3. Position 14 is an N6,N6,N6-trimethyllysine (K14). Positions 123 and 173 each coordinate substrate. K175 (proton acceptor) is an active-site residue. Residue K177 participates in substrate binding. Mg(2+) contacts are provided by K201, D203, and E204. An N6-carboxylysine modification is found at K201. H294 serves as the catalytic Proton acceptor. Substrate contacts are provided by R295, H327, and S379.

Belongs to the RuBisCO large chain family. Type I subfamily. In terms of assembly, heterohexadecamer of 8 large chains and 8 small chains; disulfide-linked. The disulfide link is formed within the large subunit homodimers. Mg(2+) is required as a cofactor. In terms of processing, the disulfide bond which can form in the large chain dimeric partners within the hexadecamer appears to be associated with oxidative stress and protein turnover.

The protein resides in the plastid. It is found in the chloroplast. It catalyses the reaction 2 (2R)-3-phosphoglycerate + 2 H(+) = D-ribulose 1,5-bisphosphate + CO2 + H2O. It carries out the reaction D-ribulose 1,5-bisphosphate + O2 = 2-phosphoglycolate + (2R)-3-phosphoglycerate + 2 H(+). RuBisCO catalyzes two reactions: the carboxylation of D-ribulose 1,5-bisphosphate, the primary event in carbon dioxide fixation, as well as the oxidative fragmentation of the pentose substrate in the photorespiration process. Both reactions occur simultaneously and in competition at the same active site. This is Ribulose bisphosphate carboxylase large chain from Mesostigma viride (Green alga).